The primary structure comprises 231 residues: 7-cyano-7-deazaguanine synthase (231 aa).

Position 8-18 (8-18 (FSGGQDSTTCL)) interacts with ATP. Cys-188, Cys-197, Cys-200, and Cys-203 together coordinate Zn(2+).

The protein belongs to the QueC family. The cofactor is Zn(2+).

It catalyses the reaction 7-carboxy-7-deazaguanine + NH4(+) + ATP = 7-cyano-7-deazaguanine + ADP + phosphate + H2O + H(+). It participates in purine metabolism; 7-cyano-7-deazaguanine biosynthesis. In terms of biological role, catalyzes the ATP-dependent conversion of 7-carboxy-7-deazaguanine (CDG) to 7-cyano-7-deazaguanine (preQ(0)). The protein is 7-cyano-7-deazaguanine synthase of Cronobacter sakazakii (strain ATCC BAA-894) (Enterobacter sakazakii).